The chain runs to 504 residues: Anaerobic nitric oxide reductase transcription regulator NorR (504 aa).

The residue at position 57 (aspartate 57) is a 4-aspartylphosphate. The region spanning 187–416 is the Sigma-54 factor interaction domain; sequence MIGLSPGMTQ…LEHAIHRAVV (230 aa). Residues 215–222 and 278–287 each bind ATP; these read GETGTGKE and ADNGTLFLDE. Positions 479–498 form a DNA-binding region, H-T-H motif; that stretch reads WAACARMLETDVANLHRLAK.

The protein operates within nitrogen metabolism; nitric oxide reduction. Functionally, required for the expression of anaerobic nitric oxide (NO) reductase, acts as a transcriptional activator for at least the norVW operon. Activation also requires sigma-54. This chain is Anaerobic nitric oxide reductase transcription regulator NorR, found in Escherichia coli O17:K52:H18 (strain UMN026 / ExPEC).